A 327-amino-acid chain; its full sequence is Beta-1,4-galactosyltransferase 7 (327 aa).

Topologically, residues 1–30 are cytoplasmic; sequence MFPSRRKAAQLPWEDGRSGLLSGGLPRKCS. The helical; Signal-anchor for type II membrane protein transmembrane segment at 31 to 51 threads the bilayer; that stretch reads VFHLFVACLSLGFFSLLWLQL. Topologically, residues 52–327 are lumenal; sequence SCSGDVARAV…KTATPWCTFS (276 aa). A disordered region spans residues 63 to 87; that stretch reads GQGQETSGPPRACPPEPPPEHWEED. Residues 100–104 and 139–141 contribute to the UDP-alpha-D-galactose site; these read PFRER and FNR. Asparagine 154 is a glycosylation site (N-linked (GlcNAc...) asparagine). UDP-alpha-D-galactose is bound by residues 164–165, tyrosine 194, and tryptophan 224; that span reads VD. A Mn(2+)-binding site is contributed by aspartate 165. 226–229 lines the N-acetyl-D-glucosamine pocket; it reads REDD. Histidine 257 contacts Mn(2+). UDP-alpha-D-galactose-binding positions include 257 to 259 and arginine 266; that span reads HLH. Residues cysteine 316 and cysteine 324 are joined by a disulfide bond.

This sequence belongs to the glycosyltransferase 7 family. Requires Mn(2+) as cofactor. As to expression, high expression in heart, pancreas and liver, medium in placenta and kidney, low in brain, skeletal muscle and lung.

It is found in the golgi apparatus. The protein resides in the golgi stack membrane. The catalysed reaction is 3-O-(beta-D-xylosyl)-L-seryl-[protein] + UDP-alpha-D-galactose = 3-O-(beta-D-galactosyl-(1-&gt;4)-beta-D-xylosyl)-L-seryl-[protein] + UDP + H(+). It functions in the pathway protein modification; protein glycosylation. In terms of biological role, required for the biosynthesis of the tetrasaccharide linkage region of proteoglycans, especially for small proteoglycans in skin fibroblasts. The sequence is that of Beta-1,4-galactosyltransferase 7 (B4GALT7) from Homo sapiens (Human).